A 353-amino-acid chain; its full sequence is Photosystem II protein D1 (353 aa).

The residue at position 2 (threonine 2) is an N-acetylthreonine. At threonine 2 the chain carries Phosphothreonine. 3 helical membrane-spanning segments follow: residues 29 to 46 (YIGW…TATS), 118 to 133 (HFLL…EWEL), and 142 to 156 (WIAV…AATA). Histidine 118 contributes to the chlorophyll a binding site. A pheophytin a-binding site is contributed by tyrosine 126. The [CaMn4O5] cluster site is built by aspartate 170 and glutamate 189. A helical transmembrane segment spans residues 197–218 (FHMLGVAGVFGGSLFSAMHGSL). Histidine 198 provides a ligand contact to chlorophyll a. Residues histidine 215 and 264-265 (SF) each bind a quinone. Histidine 215 lines the Fe cation pocket. Histidine 272 is a binding site for Fe cation. The helical transmembrane segment at 274–288 (FLAAWPVVGIWFTAL) threads the bilayer. The [CaMn4O5] cluster site is built by histidine 332, glutamate 333, and alanine 344. Positions 345 to 353 (AIEAPAVNG) are excised as a propeptide.

Belongs to the reaction center PufL/M/PsbA/D family. PSII is composed of 1 copy each of membrane proteins PsbA, PsbB, PsbC, PsbD, PsbE, PsbF, PsbH, PsbI, PsbJ, PsbK, PsbL, PsbM, PsbT, PsbX, PsbY, PsbZ, Psb30/Ycf12, at least 3 peripheral proteins of the oxygen-evolving complex and a large number of cofactors. It forms dimeric complexes. The D1/D2 heterodimer binds P680, chlorophylls that are the primary electron donor of PSII, and subsequent electron acceptors. It shares a non-heme iron and each subunit binds pheophytin, quinone, additional chlorophylls, carotenoids and lipids. D1 provides most of the ligands for the Mn4-Ca-O5 cluster of the oxygen-evolving complex (OEC). There is also a Cl(-1) ion associated with D1 and D2, which is required for oxygen evolution. The PSII complex binds additional chlorophylls, carotenoids and specific lipids. serves as cofactor. Tyr-161 forms a radical intermediate that is referred to as redox-active TyrZ, YZ or Y-Z. In terms of processing, C-terminally processed by CTPA; processing is essential to allow assembly of the oxygen-evolving complex and thus photosynthetic growth.

The protein localises to the plastid. The protein resides in the chloroplast thylakoid membrane. It carries out the reaction 2 a plastoquinone + 4 hnu + 2 H2O = 2 a plastoquinol + O2. Photosystem II (PSII) is a light-driven water:plastoquinone oxidoreductase that uses light energy to abstract electrons from H(2)O, generating O(2) and a proton gradient subsequently used for ATP formation. It consists of a core antenna complex that captures photons, and an electron transfer chain that converts photonic excitation into a charge separation. The D1/D2 (PsbA/PsbD) reaction center heterodimer binds P680, the primary electron donor of PSII as well as several subsequent electron acceptors. The chain is Photosystem II protein D1 from Conocephalum japonicum (Liverwort).